The sequence spans 147 residues: D-aminoacyl-tRNA deacylase (147 aa).

The Gly-cisPro motif, important for rejection of L-amino acids signature appears at 136 to 137 (GP).

It belongs to the DTD family. In terms of assembly, homodimer.

The protein localises to the cytoplasm. It catalyses the reaction glycyl-tRNA(Ala) + H2O = tRNA(Ala) + glycine + H(+). The enzyme catalyses a D-aminoacyl-tRNA + H2O = a tRNA + a D-alpha-amino acid + H(+). In terms of biological role, an aminoacyl-tRNA editing enzyme that deacylates mischarged D-aminoacyl-tRNAs. Also deacylates mischarged glycyl-tRNA(Ala), protecting cells against glycine mischarging by AlaRS. Acts via tRNA-based rather than protein-based catalysis; rejects L-amino acids rather than detecting D-amino acids in the active site. By recycling D-aminoacyl-tRNA to D-amino acids and free tRNA molecules, this enzyme counteracts the toxicity associated with the formation of D-aminoacyl-tRNA entities in vivo and helps enforce protein L-homochirality. This chain is D-aminoacyl-tRNA deacylase, found in Streptococcus dysgalactiae subsp. equisimilis (Streptococcus equisimilis).